The primary structure comprises 257 residues: Fimbrial assembly protein, serogroup I (257 aa).

The chain is Fimbrial assembly protein, serogroup I (fimB) from Dichelobacter nodosus (Bacteroides nodosus).